A 475-amino-acid polypeptide reads, in one-letter code: Ribulose bisphosphate carboxylase large chain (475 aa).

The substrate site is built by asparagine 123 and threonine 173. Lysine 175 serves as the catalytic Proton acceptor. Lysine 177 provides a ligand contact to substrate. Mg(2+)-binding residues include lysine 201, aspartate 203, and glutamate 204. An N6-carboxylysine modification is found at lysine 201. Histidine 294 acts as the Proton acceptor in catalysis. 3 residues coordinate substrate: arginine 295, histidine 327, and serine 379.

It belongs to the RuBisCO large chain family. Type I subfamily. As to quaternary structure, heterohexadecamer of 8 large chains and 8 small chains; disulfide-linked. The disulfide link is formed within the large subunit homodimers. The cofactor is Mg(2+). Post-translationally, the disulfide bond which can form in the large chain dimeric partners within the hexadecamer appears to be associated with oxidative stress and protein turnover.

Its subcellular location is the plastid. The protein localises to the chloroplast. The enzyme catalyses 2 (2R)-3-phosphoglycerate + 2 H(+) = D-ribulose 1,5-bisphosphate + CO2 + H2O. It catalyses the reaction D-ribulose 1,5-bisphosphate + O2 = 2-phosphoglycolate + (2R)-3-phosphoglycerate + 2 H(+). In terms of biological role, ruBisCO catalyzes two reactions: the carboxylation of D-ribulose 1,5-bisphosphate, the primary event in carbon dioxide fixation, as well as the oxidative fragmentation of the pentose substrate in the photorespiration process. Both reactions occur simultaneously and in competition at the same active site. The protein is Ribulose bisphosphate carboxylase large chain of Euglena gracilis.